The chain runs to 81 residues: Defensin-like protein 266 (81 aa).

Positions Met1–Ala26 are cleaved as a signal peptide. 3 disulfide bridges follow: Cys40–Cys58, Cys46–Cys63, and Cys50–Cys65.

Belongs to the DEFL family.

It localises to the secreted. The protein is Defensin-like protein 266 of Arabidopsis thaliana (Mouse-ear cress).